Reading from the N-terminus, the 98-residue chain is Aspartyl/glutamyl-tRNA(Asn/Gln) amidotransferase subunit C (98 aa).

Residues proline 70–aspartate 98 are disordered.

It belongs to the GatC family. As to quaternary structure, heterotrimer of A, B and C subunits.

The enzyme catalyses L-glutamyl-tRNA(Gln) + L-glutamine + ATP + H2O = L-glutaminyl-tRNA(Gln) + L-glutamate + ADP + phosphate + H(+). The catalysed reaction is L-aspartyl-tRNA(Asn) + L-glutamine + ATP + H2O = L-asparaginyl-tRNA(Asn) + L-glutamate + ADP + phosphate + 2 H(+). In terms of biological role, allows the formation of correctly charged Asn-tRNA(Asn) or Gln-tRNA(Gln) through the transamidation of misacylated Asp-tRNA(Asn) or Glu-tRNA(Gln) in organisms which lack either or both of asparaginyl-tRNA or glutaminyl-tRNA synthetases. The reaction takes place in the presence of glutamine and ATP through an activated phospho-Asp-tRNA(Asn) or phospho-Glu-tRNA(Gln). This is Aspartyl/glutamyl-tRNA(Asn/Gln) amidotransferase subunit C from Streptomyces avermitilis (strain ATCC 31267 / DSM 46492 / JCM 5070 / NBRC 14893 / NCIMB 12804 / NRRL 8165 / MA-4680).